The chain runs to 451 residues: L,D-transpeptidase 5 (451 aa).

The region spanning 263-384 (QVVKAEVSSH…AVYGDPVEVT (122 aa)) is the L,D-TPase catalytic domain. Substrate is bound by residues Y323 and 337–338 (NG). H342 acts as the Proton donor/acceptor in catalysis. The active-site Nucleophile is C360. N362 is a substrate binding site. Residues 417-451 (AAKPAATQIPVTAPVTPSDAPTPSGTPTTTNGPGG) form a disordered region. Residues 437–451 (PTPSGTPTTTNGPGG) are compositionally biased toward low complexity.

It functions in the pathway cell wall biogenesis; peptidoglycan biosynthesis. With respect to regulation, in contrast to other LDT paralogs, LdtMt5 is not inactivated by the beta-lactam carbapenems; beta-lactam carbapenems form covalent adducts with other LDT paralogs but the formation of covalent adducts was not detected for LdtMt5. Generates 3-&gt;3 cross-links in peptidoglycan, catalyzing the cleavage of the mDap(3)-D-Ala(4) bond of a tetrapeptide donor stem and the formation of a bond between the carbonyl of mDap(3) of the donor stem and the side chain of mDap(3) of the acceptor stem. Is specific for donor substrates containing a stem tetrapeptide since it cannot use pentapeptide stems. The chain is L,D-transpeptidase 5 (lprQ) from Mycobacterium tuberculosis (strain ATCC 25618 / H37Rv).